A 118-amino-acid polypeptide reads, in one-letter code: Large ribosomal subunit protein bL17 (118 aa).

This sequence belongs to the bacterial ribosomal protein bL17 family. Part of the 50S ribosomal subunit. Contacts protein L32.

The chain is Large ribosomal subunit protein bL17 from Campylobacter hominis (strain ATCC BAA-381 / DSM 21671 / CCUG 45161 / LMG 19568 / NCTC 13146 / CH001A).